We begin with the raw amino-acid sequence, 500 residues long: L-arabinose isomerase (500 aa).

Residues glutamate 306, glutamate 333, histidine 350, and histidine 450 each coordinate Mn(2+).

This sequence belongs to the arabinose isomerase family. In terms of assembly, homohexamer. Requires Mn(2+) as cofactor.

It carries out the reaction beta-L-arabinopyranose = L-ribulose. The protein operates within carbohydrate degradation; L-arabinose degradation via L-ribulose; D-xylulose 5-phosphate from L-arabinose (bacterial route): step 1/3. In terms of biological role, catalyzes the conversion of L-arabinose to L-ribulose. This chain is L-arabinose isomerase, found in Escherichia coli O6:H1 (strain CFT073 / ATCC 700928 / UPEC).